A 207-amino-acid chain; its full sequence is MPMRKRHFYRLLPLASLLLAACTIPVSKGPATSPTSPQWRQHEQQLQQLGQFETRGAFAYLSDKQKVYARFFWQQTSPERYRLLLTNPLGSTELELVVQPGVTQLTDNQGKRYVSDDPQEMIQKLTGMSIPLESLRQWILGLPGDTSDFTLDDKYRLKKLTYQQNGVTWVVDYQEYNTQVTPSLPSRLELNQDGQRIKLKMDSWTIK.

A signal peptide spans M1 to A21. The N-palmitoyl cysteine moiety is linked to residue C22. C22 carries the S-diacylglycerol cysteine lipid modification.

This sequence belongs to the LolB family. Monomer.

Its subcellular location is the cell outer membrane. In terms of biological role, plays a critical role in the incorporation of lipoproteins in the outer membrane after they are released by the LolA protein. The chain is Outer-membrane lipoprotein LolB from Yersinia pestis bv. Antiqua (strain Antiqua).